A 465-amino-acid polypeptide reads, in one-letter code: 23S rRNA (uracil(1939)-C(5))-methyltransferase RlmD (465 aa).

The interval 1 to 24 (MSEAVPLSTRRASSAGDAPGRAPV) is disordered. The region spanning 16–80 (GDAPGRAPVL…PTYEQAQVVD (65 aa)) is the TRAM domain. [4Fe-4S] cluster-binding residues include Cys93, Cys99, Cys102, and Cys181. S-adenosyl-L-methionine is bound by residues Gln289, Phe318, Asn323, Glu339, Asn367, and Asp388. Cys421 acts as the Nucleophile in catalysis.

The protein belongs to the class I-like SAM-binding methyltransferase superfamily. RNA M5U methyltransferase family. RlmD subfamily.

The catalysed reaction is uridine(1939) in 23S rRNA + S-adenosyl-L-methionine = 5-methyluridine(1939) in 23S rRNA + S-adenosyl-L-homocysteine + H(+). Functionally, catalyzes the formation of 5-methyl-uridine at position 1939 (m5U1939) in 23S rRNA. The chain is 23S rRNA (uracil(1939)-C(5))-methyltransferase RlmD from Burkholderia mallei (strain ATCC 23344).